We begin with the raw amino-acid sequence, 101 residues long: Urease subunit beta (101 aa).

Belongs to the urease beta subunit family. In terms of assembly, heterotrimer of UreA (gamma), UreB (beta) and UreC (alpha) subunits. Three heterotrimers associate to form the active enzyme.

The protein localises to the cytoplasm. The enzyme catalyses urea + 2 H2O + H(+) = hydrogencarbonate + 2 NH4(+). It functions in the pathway nitrogen metabolism; urea degradation; CO(2) and NH(3) from urea (urease route): step 1/1. This is Urease subunit beta from Cereibacter sphaeroides (strain ATCC 17025 / ATH 2.4.3) (Rhodobacter sphaeroides).